We begin with the raw amino-acid sequence, 203 residues long: Holliday junction branch migration complex subunit RuvA (203 aa).

The segment at 1-64 (MIGRLRGIIL…EDAQLLYGFN (64 aa)) is domain I. The domain II stretch occupies residues 65–142 (NKQERTLFKE…KGLHGDLFTP (78 aa)). A flexible linker region spans residues 143 to 154 (AADLVLTSPASP). A domain III region spans residues 155 to 203 (ATDDAEQEAVAALVALGYKPQEASRMVSKIARPDASSETLIREALRAAL).

The protein belongs to the RuvA family. In terms of assembly, homotetramer. Forms an RuvA(8)-RuvB(12)-Holliday junction (HJ) complex. HJ DNA is sandwiched between 2 RuvA tetramers; dsDNA enters through RuvA and exits via RuvB. An RuvB hexamer assembles on each DNA strand where it exits the tetramer. Each RuvB hexamer is contacted by two RuvA subunits (via domain III) on 2 adjacent RuvB subunits; this complex drives branch migration. In the full resolvosome a probable DNA-RuvA(4)-RuvB(12)-RuvC(2) complex forms which resolves the HJ.

It localises to the cytoplasm. In terms of biological role, the RuvA-RuvB-RuvC complex processes Holliday junction (HJ) DNA during genetic recombination and DNA repair, while the RuvA-RuvB complex plays an important role in the rescue of blocked DNA replication forks via replication fork reversal (RFR). RuvA specifically binds to HJ cruciform DNA, conferring on it an open structure. The RuvB hexamer acts as an ATP-dependent pump, pulling dsDNA into and through the RuvAB complex. HJ branch migration allows RuvC to scan DNA until it finds its consensus sequence, where it cleaves and resolves the cruciform DNA. The sequence is that of Holliday junction branch migration complex subunit RuvA from Citrobacter koseri (strain ATCC BAA-895 / CDC 4225-83 / SGSC4696).